The sequence spans 122 residues: Large ribosomal subunit protein bL12 (122 aa).

It belongs to the bacterial ribosomal protein bL12 family. Homodimer. Part of the ribosomal stalk of the 50S ribosomal subunit. Forms a multimeric L10(L12)X complex, where L10 forms an elongated spine to which 2 to 4 L12 dimers bind in a sequential fashion. Binds GTP-bound translation factors.

Forms part of the ribosomal stalk which helps the ribosome interact with GTP-bound translation factors. Is thus essential for accurate translation. The protein is Large ribosomal subunit protein bL12 of Mesoplasma florum (strain ATCC 33453 / NBRC 100688 / NCTC 11704 / L1) (Acholeplasma florum).